Here is a 118-residue protein sequence, read N- to C-terminus: UPF0295 protein BcerKBAB4_0454 (118 aa).

2 helical membrane passes run 12–32 (IRTF…LGVF) and 43–63 (FMMV…WIGM).

It belongs to the UPF0295 family.

It is found in the cell membrane. The polypeptide is UPF0295 protein BcerKBAB4_0454 (Bacillus mycoides (strain KBAB4) (Bacillus weihenstephanensis)).